Here is a 157-residue protein sequence, read N- to C-terminus: 6,7-dimethyl-8-ribityllumazine synthase (157 aa).

5-amino-6-(D-ribitylamino)uracil contacts are provided by residues F22, 57–59 (AYE), and 81–83 (TVI). 86 to 87 (GT) is a (2S)-2-hydroxy-3-oxobutyl phosphate binding site. The active-site Proton donor is H89. F114 contributes to the 5-amino-6-(D-ribitylamino)uracil binding site. Residue R128 participates in (2S)-2-hydroxy-3-oxobutyl phosphate binding.

It belongs to the DMRL synthase family. As to quaternary structure, forms an icosahedral capsid composed of 60 subunits, arranged as a dodecamer of pentamers.

It carries out the reaction (2S)-2-hydroxy-3-oxobutyl phosphate + 5-amino-6-(D-ribitylamino)uracil = 6,7-dimethyl-8-(1-D-ribityl)lumazine + phosphate + 2 H2O + H(+). The protein operates within cofactor biosynthesis; riboflavin biosynthesis; riboflavin from 2-hydroxy-3-oxobutyl phosphate and 5-amino-6-(D-ribitylamino)uracil: step 1/2. In terms of biological role, catalyzes the formation of 6,7-dimethyl-8-ribityllumazine by condensation of 5-amino-6-(D-ribitylamino)uracil with 3,4-dihydroxy-2-butanone 4-phosphate. This is the penultimate step in the biosynthesis of riboflavin. This is 6,7-dimethyl-8-ribityllumazine synthase from Haemophilus influenzae (strain ATCC 51907 / DSM 11121 / KW20 / Rd).